The sequence spans 334 residues: Probable 2-ketogluconate reductase (334 aa).

Residues 164-165 (RI), 244-246 (AGR), and Asp-270 contribute to the NAD(+) site. Arg-246 is an active-site residue. Glu-275 is an active-site residue. Catalysis depends on His-294, which acts as the Proton donor. 294–297 (HIGT) is a binding site for NAD(+).

This sequence belongs to the D-isomer specific 2-hydroxyacid dehydrogenase family.

It localises to the cytoplasm. It catalyses the reaction D-gluconate + NADP(+) = 2-dehydro-D-gluconate + NADPH + H(+). Functionally, catalyzes the NADPH-dependent reduction of 2,5-diketo-D-gluconate (25DKG) to 5-keto-D-gluconate (5KDG), 2-keto-D-gluconate (2KDG) to D-gluconate, and 2-keto-L-gulonate (2KLG) to L-idonate (IA). This is Probable 2-ketogluconate reductase (tkrA) from Dictyostelium discoideum (Social amoeba).